A 416-amino-acid chain; its full sequence is Advanced glycosylation end product-specific receptor (416 aa).

The signal sequence occupies residues 1-22; the sequence is MAAGAVVGAWMLVLSLGGTVTG. The 93-residue stretch at 23 to 115 folds into the Ig-like V-type domain; that stretch reads DQNITARIGK…KETKSNYRVR (93 aa). Over 23–352 the chain is Extracellular; it reads DQNITARIGK…VEGPGLETLA (330 aa). N-linked (GlcNAc...) asparagine glycans are attached at residues N25 and N80. 2 disulfide bridges follow: C38-C98 and C143-C207. Ig-like C2-type domains are found at residues 123–220 and 238–327; these read PEIV…RALH and PNVD…RAVS. A helical membrane pass occupies residues 353-373; the sequence is LTLGILGGLGTVALLIGVIVW. At 374–416 the chain is on the cytoplasmic side; that stretch reads HRRRQRKGQERKVPENQEEEEEERAELNQPEEPEAAESSTGGP. The segment at 377–416 is disordered; that stretch reads RQRKGQERKVPENQEEEEEERAELNQPEEPEAAESSTGGP. Positions 389–408 are enriched in acidic residues; that stretch reads NQEEEEEERAELNQPEEPEA.

Constitutive homodimer; disulfide-linked. Forms homooligomers. Interacts with S100A1 and APP. Interacts with S100B, S100A12 and S100A14. Interacts with TIRAP. Interacts with HMGB1. Interacts with LGP2; this interaction plays an important role in AGER-mediated pro-inflammatory responses and cytokine release. Interacts with double-strand break repair protein MRE11 which is a core component of the MRN complex; the interaction enhances MRE11 endonuclease activity and promotes DNA repair. Interacts with the MCM2-7 complex via interaction with complex member MCM2; the interaction is increased following DNA replication stress and stabilizes the MCM2-7 complex at replication forks. Phosphorylated on its cytoplasmic domain by PKCzeta/PRKCZ upon ligand binding. Phosphorylated by ATM following DNA damage. In terms of processing, targeted by the ubiquitin E3 ligase subunit FBXO10 to mediate its ubiquitination and degradation. Endothelial cells.

Its subcellular location is the cell membrane. The protein localises to the cell projection. It is found in the phagocytic cup. The protein resides in the early endosome. It localises to the nucleus. In terms of biological role, cell surface pattern recognition receptor that senses endogenous stress signals with a broad ligand repertoire including advanced glycation end products, S100 proteins, high-mobility group box 1 protein/HMGB1, amyloid beta/APP oligomers, nucleic acids, histones, phospholipids and glycosaminoglycans. Advanced glycosylation end products are nonenzymatically glycosylated proteins which accumulate in vascular tissue in aging and at an accelerated rate in diabetes. These ligands accumulate at inflammatory sites during the pathogenesis of various diseases including diabetes, vascular complications, neurodegenerative disorders and cancers, and RAGE transduces their binding into pro-inflammatory responses. Upon ligand binding, uses TIRAP and MYD88 as adapters to transduce the signal ultimately leading to the induction of inflammatory cytokines IL6, IL8 and TNFalpha through activation of NF-kappa-B. Interaction with S100A12 on endothelium, mononuclear phagocytes, and lymphocytes triggers cellular activation, with generation of key pro-inflammatory mediators. Interaction with S100B after myocardial infarction may play a role in myocyte apoptosis by activating ERK1/2 and p53/TP53 signaling. Contributes to the translocation of amyloid-beta peptide (ABPP) across the cell membrane from the extracellular to the intracellular space in cortical neurons. ABPP-initiated RAGE signaling, especially stimulation of p38 mitogen-activated protein kinase (MAPK), has the capacity to drive a transport system delivering ABPP as a complex with RAGE to the intraneuronal space. Participates in endothelial albumin transcytosis together with HMGB1 through the RAGE/SRC/Caveolin-1 pathway, leading to endothelial hyperpermeability. Mediates the loading of HMGB1 in extracellular vesicles (EVs) that shuttle HMGB1 to hepatocytes by transferrin-mediated endocytosis and subsequently promote hepatocyte pyroptosis by activating the NLRP3 inflammasome. Binds to DNA and promotes extracellular hypomethylated DNA (CpG DNA) uptake by cells via the endosomal route to activate inflammatory responses. Mediates phagocytosis by non-professional phagocytes (NPP) and this is enhanced by binding to ligands including RNA, DNA, HMGB1 and histones. Promotes NPP-mediated phagocytosis of Saccharomyces cerevisiae spores by binding to RNA attached to the spore wall. Also promotes NPP-mediated phagocytosis of apoptotic cells. Following DNA damage, recruited to DNA double-strand break sites where it colocalizes with the MRN repair complex via interaction with double-strand break repair protein MRE11. Enhances the endonuclease activity of MRE11, promoting the end resection of damaged DNA. Promotes DNA damage repair in trophoblasts which enhances trophoblast invasion and contributes to placental development and maintenance. Protects cells from DNA replication stress by localizing to damaged replication forks where it stabilizes the MCM2-7 complex and promotes faithful progression of the replication fork. This is Advanced glycosylation end product-specific receptor (AGER) from Bos taurus (Bovine).